A 43-amino-acid chain; its full sequence is Protein PsbN (43 aa).

Residues 5–27 (ALVAISISRLLVSFTGYALYTAF) traverse the membrane as a helical segment.

Belongs to the PsbN family.

It is found in the plastid. The protein resides in the chloroplast thylakoid membrane. Its function is as follows. May play a role in photosystem I and II biogenesis. In Bowenia serrulata (Byfield fern), this protein is Protein PsbN.